The chain runs to 561 residues: Lanosterol 14-alpha demethylase (561 aa).

A heme-binding site is contributed by Cys-501.

This sequence belongs to the cytochrome P450 family. The cofactor is heme.

It localises to the membrane. It catalyses the reaction a 14alpha-methyl steroid + 3 reduced [NADPH--hemoprotein reductase] + 3 O2 = a Delta(14) steroid + formate + 3 oxidized [NADPH--hemoprotein reductase] + 4 H2O + 4 H(+). The enzyme catalyses a 14alpha-methyl steroid + reduced [NADPH--hemoprotein reductase] + O2 = a 14alpha-hydroxymethyl steroid + oxidized [NADPH--hemoprotein reductase] + H2O + H(+). It carries out the reaction a 14alpha-hydroxymethyl steroid + reduced [NADPH--hemoprotein reductase] + O2 = a 14alpha-formyl steroid + oxidized [NADPH--hemoprotein reductase] + 2 H2O + H(+). The catalysed reaction is a 14alpha-formyl steroid + reduced [NADPH--hemoprotein reductase] + O2 = a Delta(14) steroid + formate + oxidized [NADPH--hemoprotein reductase] + H2O + 2 H(+). It catalyses the reaction lanosterol + 3 reduced [NADPH--hemoprotein reductase] + 3 O2 = 4,4-dimethyl-5alpha-cholesta-8,14,24-trien-3beta-ol + formate + 3 oxidized [NADPH--hemoprotein reductase] + 4 H2O + 4 H(+). The enzyme catalyses lanosterol + reduced [NADPH--hemoprotein reductase] + O2 = 32-hydroxylanosterol + oxidized [NADPH--hemoprotein reductase] + H2O + H(+). It carries out the reaction 32-hydroxylanosterol + reduced [NADPH--hemoprotein reductase] + O2 = 32-oxolanosterol + oxidized [NADPH--hemoprotein reductase] + 2 H2O + H(+). The catalysed reaction is 32-oxolanosterol + reduced [NADPH--hemoprotein reductase] + O2 = 4,4-dimethyl-5alpha-cholesta-8,14,24-trien-3beta-ol + formate + oxidized [NADPH--hemoprotein reductase] + H2O + 2 H(+). It catalyses the reaction eburicol + 3 reduced [NADPH--hemoprotein reductase] + 3 O2 = 14-demethyleburicol + formate + 3 oxidized [NADPH--hemoprotein reductase] + 4 H2O + 4 H(+). The enzyme catalyses eburicol + reduced [NADPH--hemoprotein reductase] + O2 = 32-hydroxyeburicol + oxidized [NADPH--hemoprotein reductase] + H2O + H(+). It carries out the reaction 32-hydroxyeburicol + reduced [NADPH--hemoprotein reductase] + O2 = 32-oxoeburicol + oxidized [NADPH--hemoprotein reductase] + 2 H2O + H(+). The catalysed reaction is 32-oxoeburicol + reduced [NADPH--hemoprotein reductase] + O2 = 14-demethyleburicol + formate + oxidized [NADPH--hemoprotein reductase] + H2O + 2 H(+). It functions in the pathway steroid biosynthesis; zymosterol biosynthesis; zymosterol from lanosterol: step 1/6. Its function is as follows. Sterol 14alpha-demethylase that plays a critical role in the third module of ergosterol biosynthesis pathway, being ergosterol the major sterol component in fungal membranes that participates in a variety of functions. The third module or late pathway involves the ergosterol synthesis itself through consecutive reactions that mainly occur in the endoplasmic reticulum (ER) membrane. In filamentous fungi, during the initial step of this module, lanosterol (lanosta-8,24-dien-3beta-ol) can be metabolized to eburicol. Sterol 14alpha-demethylase catalyzes the three-step oxidative removal of the 14alpha-methyl group (C-32) of both these sterols in the form of formate, and converts eburicol and lanosterol to 14-demethyleburicol (4,4,24-trimethylergosta-8,14,24(28)-trienol) and 4,4-dimethyl-5alpha-cholesta-8,14,24-trien-3beta-ol, respectively, which are further metabolized by other enzymes in the pathway to ergosterol. Can also use substrates not intrinsic to fungi, such as 24,25-dihydrolanosterol (DHL), producing 4,4-dimethyl-8,14-cholestadien-3-beta-ol, but at lower rates than the endogenous substrates. The sequence is that of Lanosterol 14-alpha demethylase (ERG11) from Mycosarcoma maydis (Corn smut fungus).